A 113-amino-acid polypeptide reads, in one-letter code: Large ribosomal subunit protein bL19 (113 aa).

The protein belongs to the bacterial ribosomal protein bL19 family.

In terms of biological role, this protein is located at the 30S-50S ribosomal subunit interface and may play a role in the structure and function of the aminoacyl-tRNA binding site. The chain is Large ribosomal subunit protein bL19 from Natranaerobius thermophilus (strain ATCC BAA-1301 / DSM 18059 / JW/NM-WN-LF).